A 288-amino-acid chain; its full sequence is ATP synthase gamma chain (288 aa).

It belongs to the ATPase gamma chain family. In terms of assembly, F-type ATPases have 2 components, CF(1) - the catalytic core - and CF(0) - the membrane proton channel. CF(1) has five subunits: alpha(3), beta(3), gamma(1), delta(1), epsilon(1). CF(0) has three main subunits: a, b and c.

It localises to the cell membrane. Its function is as follows. Produces ATP from ADP in the presence of a proton gradient across the membrane. The gamma chain is believed to be important in regulating ATPase activity and the flow of protons through the CF(0) complex. The polypeptide is ATP synthase gamma chain (Macrococcus caseolyticus (strain JCSC5402) (Macrococcoides caseolyticum)).